The chain runs to 516 residues: Glycosyltransferase-like protein gnt15 (516 aa).

Topologically, residues 1-24 (MSNFYNNNPRRNTFRLTERIKKKP) are cytoplasmic. The helical; Signal-anchor for type II membrane protein transmembrane segment at 25–45 (YQTLIVFILIFLFLYVFGPFG) threads the bilayer. Over 46-516 (EKKSNNNNNN…NDNCLTREHW (471 aa)) the chain is Extracellular. N-linked (GlcNAc...) asparagine glycosylation occurs at Asn152. The disordered stretch occupies residues 199-250 (DTSNNNNNNNNNNNNNNNNNNNNNNNNNNNNNNNENNDNDNGNNNNNNDNEK). A compositionally biased stretch (low complexity) spans 202–246 (NNNNNNNNNNNNNNNNNNNNNNNNNNNNNNNENNDNDNGNNNNNN). N-linked (GlcNAc...) asparagine glycans are attached at residues Asn386 and Asn412.

The protein belongs to the glycosyltransferase 8 family. Highly divergent.

It is found in the membrane. Its function is as follows. May have a role in modulating cell adhesion and glycosylation. Essential for development. This is Glycosyltransferase-like protein gnt15 (gnt15) from Dictyostelium discoideum (Social amoeba).